The chain runs to 314 residues: 3'-5' exoribonuclease YhaM (314 aa).

One can recognise an HD domain in the interval 163-279 (HVVSMLDLAK…LHYIDNLDAK (117 aa)).

The protein belongs to the YhaM family.

Functionally, shows a 3'-5' exoribonuclease activity. This Bacillus cereus (strain AH820) protein is 3'-5' exoribonuclease YhaM.